The sequence spans 491 residues: Trypanothione reductase (491 aa).

35–51 lines the FAD pocket; the sequence is DLQKHHGPPHYAALGGT. A disulfide bond links cysteine 52 and cysteine 57. Histidine 461 functions as the Proton acceptor in the catalytic mechanism.

The protein belongs to the class-I pyridine nucleotide-disulfide oxidoreductase family. In terms of assembly, homodimer. FAD is required as a cofactor. In terms of processing, the N-terminus is blocked.

The protein localises to the cytoplasm. It catalyses the reaction trypanothione + NADP(+) = trypanothione disulfide + NADPH + H(+). Functionally, trypanothione is the parasite analog of glutathione; this enzyme is the equivalent of glutathione reductase. The polypeptide is Trypanothione reductase (TPR) (Crithidia fasciculata).